The following is a 301-amino-acid chain: Amine sulfotransferase (301 aa).

Residue 46-51 (KSGTVW) coordinates 3'-phosphoadenylyl sulfate. The active-site Proton acceptor is histidine 101. Residues arginine 123, serine 131, tyrosine 186, 220–225 (ATFENM), and 252–254 (RKG) each bind 3'-phosphoadenylyl sulfate.

Belongs to the sulfotransferase 1 family. In terms of tissue distribution, expressed in male liver.

It is found in the cytoplasm. It carries out the reaction a primary amine + 3'-phosphoadenylyl sulfate = a sulfamate + adenosine 3',5'-bisphosphate + 2 H(+). Sulfotransferase that utilizes 3'-phospho-5'-adenylyl sulfate (PAPS) as sulfonate donor to catalyze the N-sulfonation of amines (PTHP, aniline, 4-chloroaniline, 2-naphthylamine). This is Amine sulfotransferase (SULT3A1) from Oryctolagus cuniculus (Rabbit).